Consider the following 493-residue polypeptide: Alpha-amylase-related protein (493 aa).

Positions 1–19 (MFKFATAVILCLAASSTLA) are cleaved as a signal peptide. Residue glutamine 20 is modified to Pyrrolidone carboxylic acid. A disulfide bridge links cysteine 47 with cysteine 103. Ca(2+) is bound by residues asparagine 117, glutamine 168, and aspartate 177. The cysteines at positions 156 and 170 are disulfide-linked. Arginine 205 serves as a coordination point for chloride. Residue aspartate 207 is the Nucleophile of the active site. Histidine 211 is a Ca(2+) binding site. Glutamate 244 serves as the catalytic Proton donor. Chloride-binding residues include asparagine 307 and arginine 342. Disulfide bonds link cysteine 375–cysteine 381, cysteine 417–cysteine 440, and cysteine 447–cysteine 459.

Belongs to the glycosyl hydrolase 13 family. In terms of assembly, monomer. Ca(2+) is required as a cofactor. The cofactor is chloride.

It is found in the secreted. It carries out the reaction Endohydrolysis of (1-&gt;4)-alpha-D-glucosidic linkages in polysaccharides containing three or more (1-&gt;4)-alpha-linked D-glucose units.. This is Alpha-amylase-related protein (Amyrel) from Drosophila ananassae (Fruit fly).